The primary structure comprises 694 residues: DNA-binding protein RFX2 (694 aa).

A DNA-binding region (RFX-type winged-helix) is located at residues 174 to 249 (HLQWLLDNYE…YHYYGIRLKP (76 aa)). Disordered regions lie at residues 267–310 (QQPI…QHHQ) and 658–694 (KDDV…MQEM). The span at 289-299 (PANSSQHASPE) shows a compositional bias: polar residues. Residues 300-310 (QSVAAQSQHHQ) are compositionally biased toward low complexity.

This sequence belongs to the RFX family. In terms of assembly, homodimer. Heterodimer; heterodimerizes with other rfx proteins. As to expression, preferentially expressed in ciliated tissues, such as neural tube, gastrocoel roof plate, epidermal multiciliated cells, otic vesicles and kidneys.

The protein localises to the nucleus. The protein resides in the cytoplasm. Its function is as follows. Transcription factor that acts as a key regulator of ciliogenesis. Specifically regulates expression of genes required for cilium assembly and function. Recognizes and binds the X-box, a regulatory motif with DNA sequence 5'-GTNRCC(0-3N)RGYAAC-3' present on promoters. Required for neural tube closure and neural ciliogenesis. This Xenopus laevis (African clawed frog) protein is DNA-binding protein RFX2 (rfx2).